We begin with the raw amino-acid sequence, 365 residues long: Sulfate/thiosulfate import ATP-binding protein CysA (365 aa).

The region spanning 3–237 is the ABC transporter domain; the sequence is IEIANIKKSF…PATRFVLEFM (235 aa). Residue 35 to 42 coordinates ATP; it reads GPSGSGKT.

This sequence belongs to the ABC transporter superfamily. Sulfate/tungstate importer (TC 3.A.1.6) family. As to quaternary structure, the complex is composed of two ATP-binding proteins (CysA), two transmembrane proteins (CysT and CysW) and a solute-binding protein (CysP).

It localises to the cell inner membrane. The catalysed reaction is sulfate(out) + ATP + H2O = sulfate(in) + ADP + phosphate + H(+). It catalyses the reaction thiosulfate(out) + ATP + H2O = thiosulfate(in) + ADP + phosphate + H(+). Functionally, part of the ABC transporter complex CysAWTP involved in sulfate/thiosulfate import. Responsible for energy coupling to the transport system. This chain is Sulfate/thiosulfate import ATP-binding protein CysA, found in Shigella flexneri.